The sequence spans 436 residues: Probable transporter MCH1 (436 aa).

7 helical membrane passes run 27-47 (VVAF…LLFT), 66-86 (MISS…GYLA), 93-113 (LLSL…SYLV), 119-139 (SVIG…SLYF), 155-175 (LAIS…AQIL), 188-208 (LEVV…ASFV), and 249-269 (FVSF…ILNI). Residue N278 is glycosylated (N-linked (GlcNAc...) asparagine). A run of 5 helical transmembrane segments spans residues 295–312 (VSIM…LGVL), 325–345 (LLVV…SAIL), 347–367 (GVSY…IWGI), 373–393 (TWGS…MFYG), and 410–430 (TAGA…IWYA).

This sequence belongs to the major facilitator superfamily.

The protein resides in the vacuole membrane. Its function is as follows. Probable transporter. This Candida albicans (strain SC5314 / ATCC MYA-2876) (Yeast) protein is Probable transporter MCH1 (MCH1).